Reading from the N-terminus, the 260-residue chain is UPF0246 protein BTH_I1090 (260 aa).

It belongs to the UPF0246 family.

The sequence is that of UPF0246 protein BTH_I1090 from Burkholderia thailandensis (strain ATCC 700388 / DSM 13276 / CCUG 48851 / CIP 106301 / E264).